Here is a 600-residue protein sequence, read N- to C-terminus: UvrABC system protein C (600 aa).

A GIY-YIG domain is found at 15–92 (DKPGCYLMKD…IKKYQPYYNV (78 aa)). One can recognise a UVR domain in the interval 197–232 (SQVKQDLTEKMTQASMNLEFERAAEFRDQLKYIEQT).

The protein belongs to the UvrC family. As to quaternary structure, interacts with UvrB in an incision complex.

Its subcellular location is the cytoplasm. The UvrABC repair system catalyzes the recognition and processing of DNA lesions. UvrC both incises the 5' and 3' sides of the lesion. The N-terminal half is responsible for the 3' incision and the C-terminal half is responsible for the 5' incision. This chain is UvrABC system protein C, found in Lactobacillus gasseri (strain ATCC 33323 / DSM 20243 / BCRC 14619 / CIP 102991 / JCM 1131 / KCTC 3163 / NCIMB 11718 / NCTC 13722 / AM63).